Here is a 504-residue protein sequence, read N- to C-terminus: ATP synthase subunit alpha (504 aa).

Residue 170 to 177 (GDRQTGKT) coordinates ATP.

The protein belongs to the ATPase alpha/beta chains family. F-type ATPases have 2 components, CF(1) - the catalytic core - and CF(0) - the membrane proton channel. CF(1) has five subunits: alpha(3), beta(3), gamma(1), delta(1), epsilon(1). CF(0) has three main subunits: a(1), b(2) and c(9-12). The alpha and beta chains form an alternating ring which encloses part of the gamma chain. CF(1) is attached to CF(0) by a central stalk formed by the gamma and epsilon chains, while a peripheral stalk is formed by the delta and b chains.

Its subcellular location is the cell membrane. The enzyme catalyses ATP + H2O + 4 H(+)(in) = ADP + phosphate + 5 H(+)(out). Produces ATP from ADP in the presence of a proton gradient across the membrane. The alpha chain is a regulatory subunit. This Shouchella clausii (strain KSM-K16) (Alkalihalobacillus clausii) protein is ATP synthase subunit alpha.